Reading from the N-terminus, the 499-residue chain is Apolipoprotein N-acyltransferase (499 aa).

The next 6 helical transmembrane spans lie at 9–29 (LLLG…PALL), 50–70 (LGYI…SIGV), 77–97 (FWWA…FFVS), 114–134 (FIFC…FTGL), 148–168 (ILIQ…VIYI), and 183–203 (LKVL…YGSV). In terms of domain architecture, CN hydrolase spans 220–464 (VQPSIPQTEK…DGLIPKKLDS (245 aa)). Glu-259 (proton acceptor) is an active-site residue. The active site involves Lys-322. The Nucleophile role is filled by Cys-372. A helical transmembrane segment spans residues 466–486 (TIFSKFGNITILLIVFFIFLV).

Belongs to the CN hydrolase family. Apolipoprotein N-acyltransferase subfamily.

It is found in the cell inner membrane. It catalyses the reaction N-terminal S-1,2-diacyl-sn-glyceryl-L-cysteinyl-[lipoprotein] + a glycerophospholipid = N-acyl-S-1,2-diacyl-sn-glyceryl-L-cysteinyl-[lipoprotein] + a 2-acyl-sn-glycero-3-phospholipid + H(+). It participates in protein modification; lipoprotein biosynthesis (N-acyl transfer). Its function is as follows. Catalyzes the phospholipid dependent N-acylation of the N-terminal cysteine of apolipoprotein, the last step in lipoprotein maturation. In Rickettsia bellii (strain RML369-C), this protein is Apolipoprotein N-acyltransferase.